Reading from the N-terminus, the 378-residue chain is MASLRKTHPLLKIVNDNSIDLPTPQNISAWWNFGSLLGLCLVAQILTGLFLAMHYTPDINAAFSSVAHICRDVNHGWLIRNLHANGASFFFLCLYLHIGRGLYYGSYLNKGTWNTGILLLLLIMVTAFVGYVLPWGQMSFWGATVITSLLSALPYVGTDLVQWLWGGFSVDNATLTRFFAFHFFIPFIATAVVALHFLFLHETGSNNPTGLSSSADKVPLHPYFLYKDLLGFLLLLAPLTALAVFSPNLFGDPDNFLRANPMVTPTHIKPEWYFLFAYAILRAIPNKLGGVLALLASILVLAVVPFLHTSKQRSLALRPWSQLCLFTLVVTVLILTWIGGMPLEQPLTTVGQIASLLYFTIILFLMPMLGLIENKMLN.

The next 4 membrane-spanning stretches (helical) occupy residues 33-53, 77-98, 113-133, and 178-198; these read FGSL…FLAM, WLIR…YLHI, WNTG…GYVL, and FFAF…LHFL. 2 residues coordinate heme b: histidine 83 and histidine 97. Histidine 182 and histidine 196 together coordinate heme b. Histidine 201 is an a ubiquinone binding site. 4 helical membrane passes run 226–246, 288–308, 320–340, and 347–367; these read YKDL…AVFS, LGGV…PFLH, WSQL…WIGG, and LTTV…FLMP.

It belongs to the cytochrome b family. As to quaternary structure, the cytochrome bc1 complex contains 3 respiratory subunits (MT-CYB, CYC1 and UQCRFS1), 2 core proteins (UQCRC1 and UQCRC2) and probably 6 low-molecular weight proteins. Requires heme b as cofactor.

It is found in the mitochondrion inner membrane. Its function is as follows. Component of the ubiquinol-cytochrome c reductase complex (complex III or cytochrome b-c1 complex) that is part of the mitochondrial respiratory chain. The b-c1 complex mediates electron transfer from ubiquinol to cytochrome c. Contributes to the generation of a proton gradient across the mitochondrial membrane that is then used for ATP synthesis. This chain is Cytochrome b (mt-cyb), found in Indostomus paradoxus (Armoured stickleback).